The primary structure comprises 152 residues: Probable flagellum biosynthesis repressor protein FlbT (152 aa).

It belongs to the FlbT family.

Its function is as follows. Has a post-transcriptional repressor function in flagellum biogenesis. Associates with the 5'-UTR of fljK mRNA and promotes its degradation. The polypeptide is Probable flagellum biosynthesis repressor protein FlbT (Brucella canis (strain ATCC 23365 / NCTC 10854 / RM-666)).